A 378-amino-acid polypeptide reads, in one-letter code: REST corepressor 3 (378 aa).

The ELM2 domain maps to 1–83 (MRVGAEYQAR…KSLADLPNFT (83 aa)). In terms of domain architecture, SANT spans 84 to 135 (PFPDEWTVEDKVLFEQAFSFHGKSFHRIQQMLPDKTIASLVKYYYSWKKTRS). The tract at residues 147–219 (LANRNNQGDS…SQRSKCRPPK (73 aa)) is disordered. A compositionally biased stretch (basic and acidic residues) spans 162–184 (EPHPMDGNDSDYDPKKEAKKEGN). The span at 205-217 (QHRHHSQRSKCRP) shows a compositional bias: basic residues. Positions 238–273 (ANTILRRLDMELISLKRQVQNAKQVNSALKQKMEGG) form a coiled coil. Residues 337 to 356 (TASSTSCCSCSPPSASAAPT) are disordered.

This sequence belongs to the CoREST family.

It is found in the nucleus. May act as a component of a corepressor complex that represses transcription. This is REST corepressor 3 (RCOR3) from Gallus gallus (Chicken).